A 397-amino-acid chain; its full sequence is Phosphoglycerate kinase (397 aa).

Residues 21-23 (DFN), Arg37, 60-63 (HLGR), Arg119, and Arg152 contribute to the substrate site. ATP is bound by residues Lys203, Gly294, Glu325, and 354–357 (GGDS).

It belongs to the phosphoglycerate kinase family. As to quaternary structure, monomer.

The protein localises to the cytoplasm. It carries out the reaction (2R)-3-phosphoglycerate + ATP = (2R)-3-phospho-glyceroyl phosphate + ADP. Its pathway is carbohydrate degradation; glycolysis; pyruvate from D-glyceraldehyde 3-phosphate: step 2/5. The chain is Phosphoglycerate kinase from Chlorobium luteolum (strain DSM 273 / BCRC 81028 / 2530) (Pelodictyon luteolum).